Reading from the N-terminus, the 537-residue chain is Atrial natriuretic peptide receptor 3 (537 aa).

The first 20 residues, 1-20 (MPSLLVLTFSACVLLGWALL), serve as a signal peptide directing secretion. Positions 21–41 (ADCTGGGGSGGAGPGRGRRER) are excised as a propeptide. The Extracellular segment spans residues 42–477 (EALPPQKIEV…PCKASGGLEE (436 aa)). N-linked (GlcNAc...) asparagine glycosylation is present at Asn-82. 2 disulfides stabilise this stretch: Cys-104/Cys-132 and Cys-209/Cys-257. N-linked (GlcNAc...) asparagine glycans are attached at residues Asn-289 and Asn-390. Residues 478 to 500 (SAVTGIVVGALLGAGLLMAFYFF) traverse the membrane as a helical segment. At 501-537 (RKKYRITIERRNQQEESNVGKHRELREDSIRSHFSVA) the chain is on the cytoplasmic side.

This sequence belongs to the ANF receptor family. As to quaternary structure, homodimer; disulfide-linked. Interacts with OSTN.

It localises to the cell membrane. Functionally, receptor for the natriuretic peptide hormones, binding with similar affinities atrial natriuretic peptide NPPA/ANP, brain natriuretic peptide NPPB/BNP, and C-type natriuretic peptide NPPC/CNP. May function as a clearance receptor for NPPA, NPPB and NPPC, regulating their local concentrations and effects. Acts as a regulator of osteoblast differentiation and bone growth by binding to its ligand osteocrin, thereby preventing binding between NPR3/NPR-C and natriuretic peptides, leading to increase cGMP production. This chain is Atrial natriuretic peptide receptor 3 (NPR3), found in Bos taurus (Bovine).